The chain runs to 317 residues: Apolipoprotein E (317 aa).

The signal sequence occupies residues 1 to 18; it reads MKVLWAALLVTFLAGCQA. Repeat copies occupy residues 80–101, 102–123, 124–145, 146–167, 168–189, 190–211, 212–233, and 234–255. Residues 80–255 form an 8 X 22 AA approximate tandem repeats region; it reads TLMDETMKEL…RLDEVKEQVA (176 aa). At Met143 the chain carries Methionine sulfoxide. At Ser147 the chain carries Phosphoserine. The LDL and other lipoprotein receptors binding stretch occupies residues 158 to 168; it reads HLRKLRKRLLR. 162 to 165 is a binding site for heparin; it reads LRKR. Positions 210–290 are lipid-binding and lipoprotein association; it reads AATVGSLASQ…SWFEPLVEDM (81 aa). 229-236 contributes to the heparin binding site; that stretch reads GERLRARM. Residues 266 to 317 form a homooligomerization region; it reads QQISLQAEAFQARLKSWFEPLVEDMQRQWAGLVEKVQAAVGASTAPVPIDNH. The interval 278-290 is specificity for association with VLDL; it reads RLKSWFEPLVEDM.

Belongs to the apolipoprotein A1/A4/E family. In terms of assembly, homotetramer. May interact with ABCA1; functionally associated with ABCA1 in the biogenesis of HDLs. May interact with APP/A4 amyloid-beta peptide; the interaction is extremely stable in vitro but its physiological significance is unclear. May interact with MAPT. May interact with MAP2. In the cerebrospinal fluid, interacts with secreted SORL1. Interacts with PMEL; this allows the loading of PMEL luminal fragment on ILVs to induce fibril nucleation. APOE exists as multiple glycosylated and sialylated glycoforms within cells and in plasma. The extent of glycosylation and sialylation are tissue and context specific. In terms of processing, glycated in plasma VLDL. Post-translationally, phosphorylated by FAM20C in the extracellular medium.

It is found in the secreted. The protein resides in the extracellular space. The protein localises to the extracellular matrix. It localises to the extracellular vesicle. Its subcellular location is the endosome. It is found in the multivesicular body. In terms of biological role, APOE is an apolipoprotein, a protein associating with lipid particles, that mainly functions in lipoprotein-mediated lipid transport between organs via the plasma and interstitial fluids. APOE is a core component of plasma lipoproteins and is involved in their production, conversion and clearance. Apolipoproteins are amphipathic molecules that interact both with lipids of the lipoprotein particle core and the aqueous environment of the plasma. As such, APOE associates with chylomicrons, chylomicron remnants, very low density lipoproteins (VLDL) and intermediate density lipoproteins (IDL) but shows a preferential binding to high-density lipoproteins (HDL). It also binds a wide range of cellular receptors including the LDL receptor/LDLR, the LDL receptor-related proteins LRP1, LRP2 and LRP8 and the very low-density lipoprotein receptor/VLDLR that mediate the cellular uptake of the APOE-containing lipoprotein particles. Finally, APOE also has a heparin-binding activity and binds heparan-sulfate proteoglycans on the surface of cells, a property that supports the capture and the receptor-mediated uptake of APOE-containing lipoproteins by cells. A main function of APOE is to mediate lipoprotein clearance through the uptake of chylomicrons, VLDLs, and HDLs by hepatocytes. APOE is also involved in the biosynthesis by the liver of VLDLs as well as their uptake by peripheral tissues ensuring the delivery of triglycerides and energy storage in muscle, heart and adipose tissues. By participating in the lipoprotein-mediated distribution of lipids among tissues, APOE plays a critical role in plasma and tissues lipid homeostasis. APOE is also involved in two steps of reverse cholesterol transport, the HDLs-mediated transport of cholesterol from peripheral tissues to the liver, and thereby plays an important role in cholesterol homeostasis. First, it is functionally associated with ABCA1 in the biogenesis of HDLs in tissues. Second, it is enriched in circulating HDLs and mediates their uptake by hepatocytes. APOE also plays an important role in lipid transport in the central nervous system, regulating neuron survival and sprouting. The sequence is that of Apolipoprotein E (APOE) from Macaca fascicularis (Crab-eating macaque).